The chain runs to 146 residues: Ribonuclease H (146 aa).

The RNase H type-1 domain maps to 1–142 (MNKIIIYTDG…ADALANLAMD (142 aa)). Mg(2+)-binding residues include aspartate 9, glutamate 47, aspartate 70, and aspartate 134.

Belongs to the RNase H family. As to quaternary structure, monomer. The cofactor is Mg(2+).

Its subcellular location is the cytoplasm. It catalyses the reaction Endonucleolytic cleavage to 5'-phosphomonoester.. Its function is as follows. Endonuclease that specifically degrades the RNA of RNA-DNA hybrids. The protein is Ribonuclease H of Ruthia magnifica subsp. Calyptogena magnifica.